The following is a 431-amino-acid chain: MRPEERWNHVGLVQREEADSVLEEPINVDEEDGGLQICRVCGDKANGYHFNVMTCEGCKGFFRRAMKRNVRLRCPFRKGTCEITRKTRRQCQACRLRKCLESGMKKEMIMSDAAVEQRRALIKRKKREKIEAPPPGGQGLTEEQQALIQELMDAQMQTFDTTFSHFKDFRLPAVFHSDCELPEVLQASLLEDPATWSQIMKDSVPMKISVQLRGEDGSIWNYQPPSKSDGKEIIPLLPHLADVSTYMFKGVINFAKVISHFRELPIEDQISLLKGATFEMCILRFNTMFDTETGTWECGRLAYCFEDPNGGFQKLLLDPLMKFHCMLKKLQLREEEYVLMQAISLFSPDRPGVVQRSVVDQLQERFALTLKAYIECSRPYPAHRFLFLKIMAVLTELRSINAQQTQQLLRIQDTHPFATPLMQELFSSTDG.

NR C4-type zinc fingers lie at residues C38–C58 and C74–C99. The nuclear receptor DNA-binding region spans C38–M104. Positions R63–R89 match the Bipartite nuclear localization signal motif. Residues K105 to E142 are hinge. Positions E143–D430 constitute an NR LBD domain. Residues S244 and I282–F285 contribute to the hyperforin site.

Belongs to the nuclear hormone receptor family. NR1 subfamily. Heterodimer with RXRA. Interacts with NCOA1. Interacts (via domain NR LBD) with CRY1 and CRY2 in a ligand-dependent manner.

The protein localises to the nucleus. Its function is as follows. Nuclear receptor that binds and is activated by a variety of endogenous and xenobiotic compounds. Transcription factor that activates the transcription of multiple genes involved in the metabolism and secretion of potentially harmful xenobiotics, endogenous compounds and drugs. Response to specific ligands is species-specific, due to differences in the ligand-binding domain. Activated by naturally occurring steroids, such as pregnenolone and progesterone. Binds to a response element in the promoters of the CYP3A4 and ABCB1/MDR1 genes. The chain is Nuclear receptor subfamily 1 group I member 2 (Nr1i2) from Rattus norvegicus (Rat).